Consider the following 212-residue polypeptide: Small ribosomal subunit protein eS1 (212 aa).

The protein belongs to the eukaryotic ribosomal protein eS1 family.

The polypeptide is Small ribosomal subunit protein eS1 (Staphylothermus marinus (strain ATCC 43588 / DSM 3639 / JCM 9404 / F1)).